Reading from the N-terminus, the 328-residue chain is Delta-aminolevulinic acid dehydratase (328 aa).

Lysine 200 serves as the catalytic Schiff-base intermediate with substrate. Residues arginine 210 and lysine 222 each contribute to the 5-aminolevulinate site. A Mg(2+)-binding site is contributed by glutamate 238. Lysine 253 acts as the Schiff-base intermediate with substrate in catalysis. 2 residues coordinate 5-aminolevulinate: serine 279 and tyrosine 318.

The protein belongs to the ALAD family. Homooctamer.

It catalyses the reaction 2 5-aminolevulinate = porphobilinogen + 2 H2O + H(+). It participates in porphyrin-containing compound metabolism; protoporphyrin-IX biosynthesis; coproporphyrinogen-III from 5-aminolevulinate: step 1/4. Stimulated by magnesium, inhibited by zinc. Functionally, catalyzes an early step in the biosynthesis of tetrapyrroles. Binds two molecules of 5-aminolevulinate per subunit, each at a distinct site, and catalyzes their condensation to form porphobilinogen. In Chlorobaculum parvum (strain DSM 263 / NCIMB 8327) (Chlorobium vibrioforme subsp. thiosulfatophilum), this protein is Delta-aminolevulinic acid dehydratase (hemB).